We begin with the raw amino-acid sequence, 176 residues long: Dual specificity phosphatase 28 (176 aa).

The 143-residue stretch at 17–159 folds into the Tyrosine-protein phosphatase domain; it reads PPLVRVAPSL…LQKYEEALQA (143 aa). Cysteine 103 functions as the Phosphocysteine intermediate in the catalytic mechanism.

Belongs to the protein-tyrosine phosphatase family. Non-receptor class dual specificity subfamily. Monomer.

It catalyses the reaction O-phospho-L-tyrosyl-[protein] + H2O = L-tyrosyl-[protein] + phosphate. The enzyme catalyses O-phospho-L-seryl-[protein] + H2O = L-seryl-[protein] + phosphate. The catalysed reaction is O-phospho-L-threonyl-[protein] + H2O = L-threonyl-[protein] + phosphate. Functionally, has phosphatase activity with the synthetic substrate 6,8-difluoro-4-methylumbelliferyl phosphate (in vitro). Has almost no detectable activity with phosphotyrosine, even less activity with phosphothreonine and displays complete lack of activity with phosphoserine. The poor activity with phosphotyrosine may be due to steric hindrance by bulky amino acid sidechains that obstruct access to the active site. This chain is Dual specificity phosphatase 28 (DUSP28), found in Homo sapiens (Human).